The sequence spans 118 residues: SPbeta prophage-derived uncharacterized protein YomS (118 aa).

This Bacillus subtilis (strain 168) protein is SPbeta prophage-derived uncharacterized protein YomS (yomS).